The primary structure comprises 127 residues: Large ribosomal subunit protein bL12 (127 aa).

This sequence belongs to the bacterial ribosomal protein bL12 family. In terms of assembly, homodimer. Part of the ribosomal stalk of the 50S ribosomal subunit. Forms a multimeric L10(L12)X complex, where L10 forms an elongated spine to which 2 to 4 L12 dimers bind in a sequential fashion. Binds GTP-bound translation factors.

Its function is as follows. Forms part of the ribosomal stalk which helps the ribosome interact with GTP-bound translation factors. Is thus essential for accurate translation. The chain is Large ribosomal subunit protein bL12 from Leptospira interrogans serogroup Icterohaemorrhagiae serovar copenhageni (strain Fiocruz L1-130).